The sequence spans 261 residues: MTNKYLSFITDEDLFECIEFLYTEYEKALEGIDFDKFFKNRIDTFKMTFDMGINNLSEQDWLAAELQRQVEKTITNHVGTFHEKLIGKIEGYTNYPVGYDYDVAKDDNTLFAEIKNKHNTLTGTHTKSLFQKICGYAEKYPDAICYYVRIIDTKSRNDIWEFRSGSIDENTREKPRFSHPRVRIASGDQFYKIVTGEEDAFKQLAYNIPIALDDWIETKRAKKGSSLGLFAELYQQAKANNRTLSEEIISINYPKSNYISF.

As to quaternary structure, monomer.

The enzyme catalyses Endonucleolytic cleavage of DNA to give specific double-stranded fragments with terminal 5'-phosphates.. Its function is as follows. A P subtype restriction enzyme that recognizes the double-stranded sequence 5'-GGNCC-3' and cleaves after G-1. The polypeptide is Type II restriction enzyme Sau96I (Staphylococcus aureus).